Reading from the N-terminus, the 300-residue chain is Protoheme IX farnesyltransferase 1 (300 aa).

Transmembrane regions (helical) follow at residues 28 to 48 (VVAL…PTIL), 54 to 74 (VAGL…NHLI), 100 to 120 (ALLF…VFTN), 122 to 142 (LTAW…TAYL), 149 to 169 (NIVI…TAVT), 176 to 196 (ALLL…ALAI), 222 to 242 (CILL…LVGM), 243 to 263 (SGPL…YKAW), and 280 to 300 (FSIY…YLWA).

It belongs to the UbiA prenyltransferase family. Protoheme IX farnesyltransferase subfamily.

Its subcellular location is the cell inner membrane. It catalyses the reaction heme b + (2E,6E)-farnesyl diphosphate + H2O = Fe(II)-heme o + diphosphate. It functions in the pathway porphyrin-containing compound metabolism; heme O biosynthesis; heme O from protoheme: step 1/1. In terms of biological role, converts heme B (protoheme IX) to heme O by substitution of the vinyl group on carbon 2 of heme B porphyrin ring with a hydroxyethyl farnesyl side group. This Shewanella sp. (strain ANA-3) protein is Protoheme IX farnesyltransferase 1.